The chain runs to 559 residues: Suppressor of tumorigenicity 7 protein-like (559 aa).

Transmembrane regions (helical) follow at residues 39 to 59 (GLAN…LYAL), 83 to 103 (FYVA…IFEW), and 513 to 533 (LPFF…IALL).

This sequence belongs to the ST7 family.

The protein localises to the membrane. This is Suppressor of tumorigenicity 7 protein-like (St7l) from Rattus norvegicus (Rat).